The following is a 238-amino-acid chain: Ribonuclease PH (238 aa).

Phosphate is bound by residues R86 and 124–126 (GTR).

The protein belongs to the RNase PH family. As to quaternary structure, homohexameric ring arranged as a trimer of dimers.

The enzyme catalyses tRNA(n+1) + phosphate = tRNA(n) + a ribonucleoside 5'-diphosphate. In terms of biological role, phosphorolytic 3'-5' exoribonuclease that plays an important role in tRNA 3'-end maturation. Removes nucleotide residues following the 3'-CCA terminus of tRNAs; can also add nucleotides to the ends of RNA molecules by using nucleoside diphosphates as substrates, but this may not be physiologically important. Probably plays a role in initiation of 16S rRNA degradation (leading to ribosome degradation) during starvation. In Histophilus somni (strain 2336) (Haemophilus somnus), this protein is Ribonuclease PH.